The chain runs to 314 residues: NF-kappa-B inhibitor alpha (314 aa).

The disordered stretch occupies residues 1 to 39 (MFQPAGHGQDWAMEGPRDGLKKERLVDDRHDSGLDSMKD). Residues 15-39 (GPRDGLKKERLVDDRHDSGLDSMKD) show a composition bias toward basic and acidic residues. K21 is covalently cross-linked (Glycyl lysine isopeptide (Lys-Gly) (interchain with G-Cter in SUMO); alternate). K21 is covalently cross-linked (Glycyl lysine isopeptide (Lys-Gly) (interchain with G-Cter in ubiquitin); alternate). K22 is covalently cross-linked (Glycyl lysine isopeptide (Lys-Gly) (interchain with G-Cter in ubiquitin)). Positions 30-36 (HDSGLDS) match the Destruction motif motif. Position 32 is a phosphoserine; by IKKA and IKKB (S32). S36 bears the Phosphoserine; by IKKA, IKKB, IKKE and TBK1 mark. At Y42 the chain carries Phosphotyrosine; by Tyr-kinases. Positions 45–54 (MVKELREIRL) match the Nuclear export signal motif. The Nuclear import signal motif lies at 110–120 (LQQTPLHLAVI). ANK repeat units follow at residues 110 to 139 (LQQT…DPEL), 143 to 172 (RGNT…PQHL), 182 to 211 (NGHT…DVNA), and 216 to 245 (NGRT…DVNR). (3S)-3-hydroxyasparagine; by HIF1AN occurs at positions 210 and 244. Phosphoserine; by CK2 occurs at positions 283 and 288. Phosphothreonine; by CK2 is present on T291. A Phosphoserine; by CK2 modification is found at S293. T296 is modified (phosphothreonine).

It belongs to the NF-kappa-B inhibitor family. In terms of assembly, interacts with RELA; the interaction requires the nuclear import signal. Part of a 70-90 kDa complex at least consisting of CHUK, IKBKB, NFKBIA, RELA, ELP1 and MAP3K14. Interacts with NKIRAS1 and NKIRAS2. Interacts with RWDD3; the interaction enhances sumoylation. Interacts with PRMT2. Interacts with PRKACA in platelets; this interaction is disrupted by thrombin and collagen. Interacts with MEFV. Interacts with DDRGK1; positively regulates NFKBIA phosphorylation and degradation. Interacts with HNRNPA2B1; the interaction may be mediated by the RRM2 domain of HNRNPA2B1, and HNRNPA2B1 may interact simultaneously with FAM76B and either NFKBIA or NFKBIE to form a complex. Phosphorylated at Ser-32 and Ser-36 by IKKA/CHUK and IKKB/IKBKB; disables inhibition of NF-kappa-B DNA-binding activity. Phosphorylation at positions 32 and 36 is prerequisite to recognition by the SCF(FBXW11) and SCF(BTRC) complexes, leading to polyubiquitination and subsequent degradation. In terms of processing, polyubiquitinated at Lys-21 and/or Lys-22 following phosphorylation at Ser-32 and Ser-36. Monoubiquitinated at Lys-21 and/or Lys-22 by UBE2D3. Ubiquitin chain elongation is then performed by CDC34 in cooperation with the SCF(FBXW11) E3 ligase complex, building ubiquitin chains from the UBE2D3-primed NFKBIA-linked ubiquitin. The resulting polyubiquitination leads to protein degradation. Also ubiquitinated by the SCF(BTRC) complex following stimulus-dependent phosphorylation at Ser-32 and Ser-36. Deubiquitinated by USP38, leading to NF-kappa-B inhibition. Post-translationally, sumoylated; sumoylation requires the presence of the nuclear import signal. Sumoylation blocks ubiquitination and proteasome-mediated degradation of the protein thereby increasing the protein stability. Hydroxylated by HIF1AN.

It localises to the cytoplasm. It is found in the nucleus. Functionally, inhibits the activity of dimeric NF-kappa-B/REL complexes by trapping REL (RELA/p65 and NFKB1/p50) dimers in the cytoplasm by masking their nuclear localization signals. On cellular stimulation by immune and pro-inflammatory responses, becomes phosphorylated promoting ubiquitination and degradation, enabling the dimeric RELA to translocate to the nucleus and activate transcription. The sequence is that of NF-kappa-B inhibitor alpha (Nfkbia) from Rattus norvegicus (Rat).